The chain runs to 64 residues: MHCLPVPVILLLLIASTPSVDARPKTKDDVPPASFHGADNANRILRTLWNLRGCCEDKTCCFIG.

The N-terminal stretch at 1–22 is a signal peptide; sequence MHCLPVPVILLLLIASTPSVDA. Residues 23–51 constitute a propeptide that is removed on maturation; it reads RPKTKDDVPPASFHGADNANRILRTLWNL. At Ile-63 the chain carries Isoleucine amide.

The protein belongs to the conotoxin T superfamily. Contains 2 disulfide bonds that can be either 'C1-C3, C2-C4' or 'C1-C4, C2-C3', since these disulfide connectivities have been observed for conotoxins with cysteine framework V (for examples, see AC P0DQQ7 and AC P81755). As to expression, expressed by the venom duct.

The protein localises to the secreted. The polypeptide is Conotoxin Ts-011 (Conus tessulatus (Tessellate cone)).